We begin with the raw amino-acid sequence, 375 residues long: Beta sliding clamp (375 aa).

It belongs to the beta sliding clamp family. As to quaternary structure, forms a ring-shaped head-to-tail homodimer around DNA which binds and tethers DNA polymerases and other proteins to the DNA. The DNA replisome complex has a single clamp-loading complex (3 tau and 1 each of delta, delta', psi and chi subunits) which binds 3 Pol III cores (1 core on the leading strand and 2 on the lagging strand) each with a beta sliding clamp dimer. Additional proteins in the replisome are other copies of gamma, psi and chi, Ssb, DNA helicase and RNA primase.

It localises to the cytoplasm. Functionally, confers DNA tethering and processivity to DNA polymerases and other proteins. Acts as a clamp, forming a ring around DNA (a reaction catalyzed by the clamp-loading complex) which diffuses in an ATP-independent manner freely and bidirectionally along dsDNA. Initially characterized for its ability to contact the catalytic subunit of DNA polymerase III (Pol III), a complex, multichain enzyme responsible for most of the replicative synthesis in bacteria; Pol III exhibits 3'-5' exonuclease proofreading activity. The beta chain is required for initiation of replication as well as for processivity of DNA replication. In Mycoplasma capricolum subsp. capricolum (strain California kid / ATCC 27343 / NCTC 10154), this protein is Beta sliding clamp (dnaN).